Reading from the N-terminus, the 261-residue chain is Sugar fermentation stimulation protein homolog (261 aa).

A disordered region spans residues 1-23; the sequence is MTDSAKPQNPDPGHESRRVAPLA.

It belongs to the SfsA family.

The sequence is that of Sugar fermentation stimulation protein homolog from Syntrophobacter fumaroxidans (strain DSM 10017 / MPOB).